Reading from the N-terminus, the 185-residue chain is Elongation factor P (185 aa).

The protein belongs to the elongation factor P family.

It localises to the cytoplasm. The protein operates within protein biosynthesis; polypeptide chain elongation. In terms of biological role, involved in peptide bond synthesis. Stimulates efficient translation and peptide-bond synthesis on native or reconstituted 70S ribosomes in vitro. Probably functions indirectly by altering the affinity of the ribosome for aminoacyl-tRNA, thus increasing their reactivity as acceptors for peptidyl transferase. This chain is Elongation factor P, found in Salinispora tropica (strain ATCC BAA-916 / DSM 44818 / JCM 13857 / NBRC 105044 / CNB-440).